A 521-amino-acid chain; its full sequence is Bifunctional purine biosynthesis protein PurH (521 aa).

The MGS-like domain occupies 1–145; sequence MIKQALISVS…KNHRDVTVIV (145 aa).

The protein belongs to the PurH family.

It carries out the reaction (6R)-10-formyltetrahydrofolate + 5-amino-1-(5-phospho-beta-D-ribosyl)imidazole-4-carboxamide = 5-formamido-1-(5-phospho-D-ribosyl)imidazole-4-carboxamide + (6S)-5,6,7,8-tetrahydrofolate. The enzyme catalyses IMP + H2O = 5-formamido-1-(5-phospho-D-ribosyl)imidazole-4-carboxamide. The protein operates within purine metabolism; IMP biosynthesis via de novo pathway; 5-formamido-1-(5-phospho-D-ribosyl)imidazole-4-carboxamide from 5-amino-1-(5-phospho-D-ribosyl)imidazole-4-carboxamide (10-formyl THF route): step 1/1. It functions in the pathway purine metabolism; IMP biosynthesis via de novo pathway; IMP from 5-formamido-1-(5-phospho-D-ribosyl)imidazole-4-carboxamide: step 1/1. The protein is Bifunctional purine biosynthesis protein PurH of Burkholderia multivorans (strain ATCC 17616 / 249).